The chain runs to 3460 residues: Reelin (3460 aa).

The signal sequence occupies residues 1 to 25 (MERSGWARQTFLLALLLGATLRARA). In terms of domain architecture, Reelin spans 26–190 (AAGYYPRFSP…GAPTDVTVHP (165 aa)). The cysteines at positions 40 and 126 are disulfide-linked. N140 carries N-linked (GlcNAc...) asparagine glycosylation. A disulfide bond links C154 and C178. N-linked (GlcNAc...) asparagine glycans are attached at residues N257, N289, and N305. C539 and C580 form a disulfide bridge. The BNR 1 repeat unit spans residues 592-603 (EFSTNHGRSWSL). A disulfide bond links C608 and C613. Residue N628 is glycosylated (N-linked (GlcNAc...) asparagine). The EGF-like 1 domain occupies 670 to 701 (IGPSCLKFCSGRGQCTRHGCKCDPGFSGPACE). Disulfide bonds link C674–C684 and C691–C700. The BNR 2 repeat unit spans residues 798–809 (HYSYDNGITWKL). Residues C894 and C936 are joined by a disulfide bond. A BNR 3 repeat occupies 951-962 (EYSTNHGLTWHL). 3 disulfides stabilise this stretch: C967–C974, C1033–C1043, and C1050–C1059. Positions 1029-1060 (IGQQCPNMCSGHGSCDHGICRCDQGYQGTECH) constitute an EGF-like 2 domain. One copy of the BNR 4 repeat lies at 1156–1167 (QYSNNGGIQWHL). N-linked (GlcNAc...) asparagine glycosylation is present at N1266. C1270 and C1309 form a disulfide bridge. The BNR 5 repeat unit spans residues 1322–1333 (QYSHDAGMSWFL). An intrachain disulfide couples C1338 to C1347. The 34-residue stretch at 1408–1441 (ISEPCPSYCSGHGDCISGVCFCDLGYTAAQGTCV) folds into the EGF-like 3 domain. The BNR 6 repeat unit spans residues 1534-1545 (QYSNDNGILWHL). N-linked (GlcNAc...) asparagine glycosylation is present at N1599. The cysteines at positions 1632 and 1672 are disulfide-linked. Residues 1685–1696 (QYSLNNGKDWHL) form a BNR 7 repeat. A disulfide bridge links C1701 with C1708. A glycan (N-linked (GlcNAc...) asparagine) is linked at N1749. An EGF-like 4 domain is found at 1764-1795 (LASGCPWMCSGRGICDAGRCVCDRGFGGPYCV). The stretch at 1883–1894 (QFSISGGITWHL) is one BNR 8 repeat. The N-linked (GlcNAc...) asparagine glycan is linked to N1920. One copy of the BNR 9 repeat lies at 2042-2053 (EFSRDFGATWHL). The Zn(2+) site is built by H2060 and H2073. In terms of domain architecture, EGF-like 5 spans 2128–2160 (IGPQCEEMCNGQGSCINGTKCICDPGYSGPTCK). 3 cysteine pairs are disulfide-bonded: C2132-C2142, C2136-C2148, and C2150-C2159. The N-linked (GlcNAc...) asparagine glycan is linked to N2144. E2178 contacts Zn(2+). A disulfide bridge connects residues C2194 and C2234. One copy of the BNR 10 repeat lies at 2249–2260 (QYSLNGGLSWSL). Residue E2263 participates in Zn(2+) binding. 2 N-linked (GlcNAc...) asparagine glycosylation sites follow: N2268 and N2316. Intrachain disulfides connect C2347/C2386, C2392/C2558, and C2543/C2583. Zn(2+) is bound by residues E2396, E2398, and H2459. The stretch at 2398-2409 (EYSVDLGLSWHP) is one BNR 11 repeat. The EGF-like 6 domain occupies 2477 to 2508 (IGDGCIDMCSGHGRCIQGNCVCDEQWGGLYCD). N-linked (GlcNAc...) asparagine glycosylation is present at N2568. BNR repeat units lie at residues 2597-2608 (EYSVNGGITWNL) and 2777-2788 (QYSTDFGVSWNY). Cystine bridges form between C2793/C2800, C2856/C2866, C2860/C2871, C2873/C2882, and C2918/C2965. The EGF-like 7 domain occupies 2852–2883 (LGPGCLDNCRGHGDCLREQCICDPGYSGPNCY). An N-linked (GlcNAc...) asparagine glycan is attached at N2961. The stretch at 2978–2989 (DYSTDGGITWTL) is one BNR 14 repeat. Residues N3015 and N3072 are each glycosylated (N-linked (GlcNAc...) asparagine). A BNR 15 repeat occupies 3142–3154 (EYTKDARSDSWQL). Residues C3159 and C3169 are joined by a disulfide bond. A glycan (N-linked (GlcNAc...) asparagine) is linked at N3184. The EGF-like 8 domain maps to 3227-3259 (IGEACPKLCSGHGYCTTGAICICDESFQGDDCS). Disulfide bonds link C3231/C3241, C3235/C3247, C3249/C3258, and C3295/C3345. The BNR 16 repeat unit spans residues 3362–3373 (QYSVNNGITWHV). N-linked (GlcNAc...) asparagine glycosylation is found at N3411 and N3438.

Belongs to the reelin family. In terms of assembly, oligomer of disulfide-linked homodimers. N-glycosylated and to a lesser extent also O-glycosylated. As to expression, abundantly produced during brain ontogenesis by the Cajal-Retzius cells and other pioneer neurons located in the telencephalic marginal zone and by granule cells of the external granular layer of the cerebellum. In adult brain, preferentially expressed in GABAergic interneurons of prefrontal cortices, temporal cortex, hippocampus and glutamatergic granule cells of cerebellum. Expression is reduced to about 50% in patients with schizophrenia. Also expressed in fetal and adult liver.

Its subcellular location is the secreted. The protein localises to the extracellular space. The protein resides in the extracellular matrix. Extracellular matrix serine protease secreted by pioneer neurons that plays a role in layering of neurons in the cerebral cortex and cerebellum by coordinating cell positioning during neurodevelopment. Regulates microtubule function in neurons and neuronal migration. Binding to the extracellular domains of lipoprotein receptors VLDLR and LRP8/APOER2 induces tyrosine phosphorylation of DAB1 and modulation of TAU phosphorylation. Affects migration of sympathetic preganglionic neurons in the spinal cord, where it seems to act as a barrier to neuronal migration. Enzymatic activity is important for the modulation of cell adhesion. The sequence is that of Reelin (RELN) from Homo sapiens (Human).